The chain runs to 163 residues: Acetolactate synthase small subunit (163 aa).

The ACT domain occupies 4-79; the sequence is ILSVLLENES…VFKVVNLSEQ (76 aa).

It belongs to the acetolactate synthase small subunit family. Dimer of large and small chains.

The catalysed reaction is 2 pyruvate + H(+) = (2S)-2-acetolactate + CO2. The protein operates within amino-acid biosynthesis; L-isoleucine biosynthesis; L-isoleucine from 2-oxobutanoate: step 1/4. Its pathway is amino-acid biosynthesis; L-valine biosynthesis; L-valine from pyruvate: step 1/4. This is Acetolactate synthase small subunit (ilvH) from Haemophilus influenzae (strain ATCC 51907 / DSM 11121 / KW20 / Rd).